The following is an 862-amino-acid chain: Protein translocase subunit SecA (862 aa).

ATP is bound by residues Gln86, 104–108 (GEGKT), and Asp499. Residues Cys848, Cys850, Cys859, and His860 each coordinate Zn(2+).

Belongs to the SecA family. As to quaternary structure, monomer and homodimer. Part of the essential Sec protein translocation apparatus which comprises SecA, SecYEG and auxiliary proteins SecDF-YajC and YidC. Requires Zn(2+) as cofactor.

It is found in the cell inner membrane. The protein localises to the cytoplasm. It carries out the reaction ATP + H2O + cellular proteinSide 1 = ADP + phosphate + cellular proteinSide 2.. In terms of biological role, part of the Sec protein translocase complex. Interacts with the SecYEG preprotein conducting channel. Has a central role in coupling the hydrolysis of ATP to the transfer of proteins into and across the cell membrane, serving both as a receptor for the preprotein-SecB complex and as an ATP-driven molecular motor driving the stepwise translocation of polypeptide chains across the membrane. This Ehrlichia canis (strain Jake) protein is Protein translocase subunit SecA.